A 305-amino-acid chain; its full sequence is NAD kinase 2 (305 aa).

D78 acts as the Proton acceptor in catalysis. Residues D78–G79, N152–E153, D182, T193–S198, and N251 contribute to the NAD(+) site.

This sequence belongs to the NAD kinase family. Requires a divalent metal cation as cofactor.

Its subcellular location is the cytoplasm. The catalysed reaction is NAD(+) + ATP = ADP + NADP(+) + H(+). In terms of biological role, involved in the regulation of the intracellular balance of NAD and NADP, and is a key enzyme in the biosynthesis of NADP. Catalyzes specifically the phosphorylation on 2'-hydroxyl of the adenosine moiety of NAD to yield NADP. Functions as a growth repressor under light-activated heterotrophic growth conditions and light and dark cycle conditions in the presence of glucose. NADP(H)/NAD(H) maintenance by slr0400 probably plays a significant role in modulating glycolysis and the TCA cycle to repress the growth rate and maintain the photosynthetic capacity. This chain is NAD kinase 2, found in Synechocystis sp. (strain ATCC 27184 / PCC 6803 / Kazusa).